A 434-amino-acid chain; its full sequence is Probable G-protein coupled receptor B0563.6 (434 aa).

N-linked (GlcNAc...) asparagine glycosylation is present at Asn12. 2 helical membrane-spanning segments follow: residues 30 to 50 (VLPC…MVLA) and 65 to 85 (LAVA…TEYL). Asn88 is a glycosylation site (N-linked (GlcNAc...) asparagine). The next 2 membrane-spanning stretches (helical) occupy residues 105–125 (LMLT…VALS) and 147–167 (ATRA…PYAI). N-linked (GlcNAc...) asparagine glycosylation occurs at Asn181. The next 2 membrane-spanning stretches (helical) occupy residues 208–228 (ILRF…MIAF) and 258–278 (GGTV…LLLI). 2 N-linked (GlcNAc...) asparagine glycosylation sites follow: Asn429 and Asn430.

This sequence belongs to the G-protein coupled receptor 1 family.

Its subcellular location is the cell membrane. Functionally, not known. Putative receptor. The protein is Probable G-protein coupled receptor B0563.6 of Caenorhabditis elegans.